Consider the following 492-residue polypeptide: MEPNNVERNLQSLRRLYSLLVANARNEYIPEAYKLDDNTQFLLKRLLDFASHEHFVTQSNLLATQLRVFPKTVLHGAKPSNVADSSETTPPAMLSQINGSHITRVSKPLEAKGTLQRDLRVDQIRSNPSKDVLTEEVVDAIEQIDTQLSALSFVSSRVDSDERTRSVKSFVTPPTEECRQNSQASMPCLRSNYMTVSQKSVISGAEVTFPYNDQLVRVTSPPQPLPPRAVSGFKKPNQSNRASQKMPIMKPTLMDQETETFDDDSSETEADQTPSATGSESEDEEVSTSQEYSGETGSSSGSEWETQAENDTESKSESSYPPQNDDSVSEVSTSPPHTDRDTSREPGKQRRNVMGRFKRIKNKIGQIFHHHHHHHHHHHHHDKEKPSAWNKLQSKFHHKHQEKSKERKRPMSESKGLTTHKQQHQGGHFHALVEGLVRHRKHSKKQKHQLKSDAKKTEWWKLLKKRQGGGVKIPKRGRVKLGKKKHYLSKNV.

Disordered regions lie at residues 218–354 (VTSP…RNVM) and 394–426 (SKFH…QHQG). Residues 256-270 (QETETFDDDSSETEA) are compositionally biased toward acidic residues. The span at 287-305 (STSQEYSGETGSSSGSEWE) shows a compositional bias: low complexity. Polar residues predominate over residues 317-336 (ESSYPPQNDDSVSEVSTSPP). Composition is skewed to basic and acidic residues over residues 337 to 348 (HTDRDTSREPGK) and 403 to 412 (KSKERKRPMS).

Mostly expressed in pollen and open flowers and, to a lower extent, in closed flowers.

In terms of biological role, positively regulates reproductive function by facilitating male gametophyte formation and double fertilization. The chain is Protein KOKOPELLI from Arabidopsis thaliana (Mouse-ear cress).